A 272-amino-acid chain; its full sequence is Dermonecrotic toxin LvSicTox-alphaIC1biii (272 aa).

H5 is a catalytic residue. Residues E25 and D27 each coordinate Mg(2+). Residue H41 is the Nucleophile of the active site. 2 disulfides stabilise this stretch: C45-C51 and C47-C189. Position 84 (D84) interacts with Mg(2+).

It belongs to the arthropod phospholipase D family. Class II subfamily. It depends on Mg(2+) as a cofactor. As to expression, expressed by the venom gland.

It localises to the secreted. It catalyses the reaction an N-(acyl)-sphingosylphosphocholine = an N-(acyl)-sphingosyl-1,3-cyclic phosphate + choline. The enzyme catalyses an N-(acyl)-sphingosylphosphoethanolamine = an N-(acyl)-sphingosyl-1,3-cyclic phosphate + ethanolamine. It carries out the reaction a 1-acyl-sn-glycero-3-phosphocholine = a 1-acyl-sn-glycero-2,3-cyclic phosphate + choline. The catalysed reaction is a 1-acyl-sn-glycero-3-phosphoethanolamine = a 1-acyl-sn-glycero-2,3-cyclic phosphate + ethanolamine. Functionally, dermonecrotic toxins cleave the phosphodiester linkage between the phosphate and headgroup of certain phospholipids (sphingolipid and lysolipid substrates), forming an alcohol (often choline) and a cyclic phosphate. This toxin acts on sphingomyelin (SM). It may also act on ceramide phosphoethanolamine (CPE), lysophosphatidylcholine (LPC) and lysophosphatidylethanolamine (LPE), but not on lysophosphatidylserine (LPS), and lysophosphatidylglycerol (LPG). It acts by transphosphatidylation, releasing exclusively cyclic phosphate products as second products. Induces dermonecrosis, hemolysis, increased vascular permeability, edema, inflammatory response, and platelet aggregation. The sequence is that of Dermonecrotic toxin LvSicTox-alphaIC1biii from Loxosceles variegata (Recluse spider).